Here is a 162-residue protein sequence, read N- to C-terminus: Protein FAM167B (162 aa).

Belongs to the FAM167 (SEC) family.

This Mus musculus (Mouse) protein is Protein FAM167B (Fam167b).